Consider the following 853-residue polypeptide: Deubiquitinase otu (853 aa).

Positions 1–20 (MDMQVQRPITSGSRQAPDPY) are disordered. One can recognise an OTU domain in the interval 29-150 (LYRKHTARDA…ENHFDSVYDV (122 aa)). The active site involves D37. The active-site Nucleophile is the S40. H143 is a catalytic residue. A Tudor domain is found at 336-396 (NFKVGAKCKV…HPLPPDEYRP (61 aa)). The LC domain stretch occupies residues 396-853 (PWSLPFRYHR…AAVYAATRHH (458 aa)). Residues 460–470 (QDDEQRDHNDP) are compositionally biased toward basic and acidic residues. 4 disordered regions span residues 460-531 (QDDE…YVPM), 681-704 (AVES…LEKS), 732-794 (GPAA…AAQG), and 817-853 (NMDP…TRHH). Over residues 499-517 (SRVQPQNSSSSQNQEVSGS) the composition is skewed to low complexity. A compositionally biased stretch (polar residues) spans 747–758 (NGSQFSFYTTPS). A compositionally biased stretch (pro residues) spans 769–778 (LLQPPPPPPI). Low complexity-rich tracts occupy residues 783 to 794 (AGPPQLGGAAQG) and 820 to 838 (PSAQ…APLS).

In terms of assembly, self aggregates, forming amyloid-like fibrillar helical structures; protein aggregation is mediated by the C-terminal LC domain, is enhanced by RNA binding and is essential for deubiquitinase activity. Interacts (via OTU domain) with bam (via C-terminus); the interaction enhances otu aggregation and deubiquitinase activity. Together with bam interacts with CycA/cyclin-A; the interaction stabilizes CycA by promoting its deubiquitination. Together with bam interacts with Traf6. Interacts with Hrb27C; the interaction is RNA-independent. Associates (via N-terminus) with mRNP complexes; the interaction is weak. In terms of tissue distribution, expressed at high levels in the ovary, at low levels in the brain and fat body, and at moderate levels in the gut.

Its subcellular location is the cytoplasm. The protein resides in the cell cortex. It is found in the perinuclear region. Activated by protein aggregation, which is mediated by the LC domain and enhanced by RNA binding. Its function is as follows. Catalytic component of a deubiquitinase complex consisting of bam and otu. The complex deubiquitinates K63-linked polyubiquitinated proteins; this antagonizes the ubiquitination activity of Traf6 and regulates the IMD immune signaling pathway. Otu-bam deubiquitinase activity is regulated by Traf6 dependent immune signaling regulation of bam expression levels; this forms a feedback loop that regulates the IMD immune signaling pathway and balances gut immune activity during aging. The complex deubiquitinates and stabilizes CycA/cyclin-A to regulate CycA-dependent differentiation. Involved in grk mRNA localization to the dorsal anterior region of the oocyte required for dorsal-ventral axis determination; may function as a ribonuclear protein complex together with sqd and Hrb27C. May regulate actin cytoskeleton organization in differentiating cystocytes during fusome maturation; required for efficient nurse cell cytoplasmic dumping during oogenesis. Essential for female fertility; involved in germ cell proliferation and germ cell differentiation. Functionally, involved in the early stages of germ cell proliferation and differentiation during oogenesis. Required for polytene chromosome dispersal in nurse cells during oogenesis. In terms of biological role, involved in the later stages of germ cell proliferation and differentiation during oogenesis. In Drosophila melanogaster (Fruit fly), this protein is Deubiquitinase otu.